A 345-amino-acid chain; its full sequence is NADH-quinone oxidoreductase subunit H (345 aa).

8 helical membrane-spanning segments follow: residues 13 to 33 (VIILAQTLAVVAFVMISLLFL), 84 to 104 (FILAPLTSFVLAMIAWAVIPF), 115 to 135 (VAILYVFAVSSLEVYGVIMGG), 161 to 181 (IGLIIIGVILSTGSMNFGDIV), 190 to 210 (LFNWYWLPHFPMVFLFFISCL), 248 to 268 (YIAIFLMCALTSLLFFGGWLS), 277 to 297 (PLWMVAKMAFFFFLFAMVKAI), and 309 to 329 (LGWKVFLPFSLIWVVFVAFAA).

It belongs to the complex I subunit 1 family. As to quaternary structure, NDH-1 is composed of 14 different subunits. Subunits NuoA, H, J, K, L, M, N constitute the membrane sector of the complex.

Its subcellular location is the cell inner membrane. It catalyses the reaction a quinone + NADH + 5 H(+)(in) = a quinol + NAD(+) + 4 H(+)(out). Its function is as follows. NDH-1 shuttles electrons from NADH, via FMN and iron-sulfur (Fe-S) centers, to quinones in the respiratory chain. The immediate electron acceptor for the enzyme in this species is believed to be ubiquinone. Couples the redox reaction to proton translocation (for every two electrons transferred, four hydrogen ions are translocated across the cytoplasmic membrane), and thus conserves the redox energy in a proton gradient. This subunit may bind ubiquinone. This is NADH-quinone oxidoreductase subunit H from Ruegeria sp. (strain TM1040) (Silicibacter sp.).